Consider the following 359-residue polypeptide: Phospho-N-acetylmuramoyl-pentapeptide-transferase (359 aa).

The next 10 membrane-spanning stretches (helical) occupy residues Q3–I23, G53–I73, G84–I104, T117–F137, I156–A176, L187–F207, L231–A251, I255–T275, V283–F303, and V330–Y350.

Belongs to the glycosyltransferase 4 family. MraY subfamily. Requires Mg(2+) as cofactor.

It is found in the cell membrane. It carries out the reaction UDP-N-acetyl-alpha-D-muramoyl-L-alanyl-gamma-D-glutamyl-meso-2,6-diaminopimeloyl-D-alanyl-D-alanine + di-trans,octa-cis-undecaprenyl phosphate = di-trans,octa-cis-undecaprenyl diphospho-N-acetyl-alpha-D-muramoyl-L-alanyl-D-glutamyl-meso-2,6-diaminopimeloyl-D-alanyl-D-alanine + UMP. It functions in the pathway cell wall biogenesis; peptidoglycan biosynthesis. Catalyzes the initial step of the lipid cycle reactions in the biosynthesis of the cell wall peptidoglycan: transfers peptidoglycan precursor phospho-MurNAc-pentapeptide from UDP-MurNAc-pentapeptide onto the lipid carrier undecaprenyl phosphate, yielding undecaprenyl-pyrophosphoryl-MurNAc-pentapeptide, known as lipid I. The polypeptide is Phospho-N-acetylmuramoyl-pentapeptide-transferase (Rhodococcus jostii (strain RHA1)).